Reading from the N-terminus, the 161-residue chain is Transcription elongation factor GreA (161 aa).

Residues 43–68 (SENAEYEAAREKQAFVEARIKHLEDI) are a coiled coil.

The protein belongs to the GreA/GreB family.

Functionally, necessary for efficient RNA polymerase transcription elongation past template-encoded arresting sites. The arresting sites in DNA have the property of trapping a certain fraction of elongating RNA polymerases that pass through, resulting in locked ternary complexes. Cleavage of the nascent transcript by cleavage factors such as GreA or GreB allows the resumption of elongation from the new 3'terminus. GreA releases sequences of 2 to 3 nucleotides. The polypeptide is Transcription elongation factor GreA (Rickettsia bellii (strain OSU 85-389)).